We begin with the raw amino-acid sequence, 346 residues long: Uroporphyrinogen decarboxylase (346 aa).

Residues 21–25, aspartate 71, tyrosine 146, serine 201, and histidine 316 each bind substrate; that span reads RQAGR.

This sequence belongs to the uroporphyrinogen decarboxylase family. In terms of assembly, homodimer.

It is found in the cytoplasm. It carries out the reaction uroporphyrinogen III + 4 H(+) = coproporphyrinogen III + 4 CO2. It functions in the pathway porphyrin-containing compound metabolism; protoporphyrin-IX biosynthesis; coproporphyrinogen-III from 5-aminolevulinate: step 4/4. Functionally, catalyzes the decarboxylation of four acetate groups of uroporphyrinogen-III to yield coproporphyrinogen-III. The chain is Uroporphyrinogen decarboxylase from Rickettsia massiliae (strain Mtu5).